We begin with the raw amino-acid sequence, 384 residues long: Neuropeptide Y receptor type 1 (384 aa).

Residues 1–44 lie on the Extracellular side of the membrane; it reads MNSTLFSQVENHSVHSNFSEKNAQLLAFENDDCHLPLAMIFTLA. N-linked (GlcNAc...) asparagine glycans are attached at residues asparagine 2, asparagine 11, and asparagine 17. A helical transmembrane segment spans residues 45–65; that stretch reads LAYGAVIILGVSGNLALIIII. Over 66–76 the chain is Cytoplasmic; the sequence is LKQKEMRNVTN. Residues 77-97 form a helical membrane-spanning segment; sequence ILIVNLSFSDLLVAIMCLPFT. The Extracellular portion of the chain corresponds to 98-116; sequence FVYTLMDHWVFGEAMCKLN. A disulfide bond links cysteine 113 and cysteine 198. A helical membrane pass occupies residues 117–137; it reads PFVQCVSITVSIFSLVLIAVE. Residues 138-154 lie on the Cytoplasmic side of the membrane; the sequence is RHQLIINPRGWRPNNRH. Residues 155 to 175 form a helical membrane-spanning segment; that stretch reads AYVGIAVIWVLAVASSLPFLI. Residues 176-211 lie on the Extracellular side of the membrane; sequence YQVMTDEPFQNVTLDAYKDKYVCFDQFPSDSHRLSY. Residues 212–232 traverse the membrane as a helical segment; the sequence is TTLLLVLQYFGPLCFIFICYF. The Cytoplasmic segment spans residues 233–260; it reads KIYIRLKRRNNMMDKMRDNKYRSSETKR. The chain crosses the membrane as a helical span at residues 261-281; that stretch reads INIMLLSIVVAFAVCWLPLTI. Topologically, residues 282 to 299 are extracellular; the sequence is FNTVFDWNHQIIATCNHN. A helical transmembrane segment spans residues 300–320; it reads LLFLLCHLTAMISTCVNPIFY. The Cytoplasmic segment spans residues 321 to 384; the sequence is GFLNKNFQRD…INNNDDNEKI (64 aa). Cysteine 338 carries the S-palmitoyl cysteine lipid modification. Serine 368 is subject to Phosphoserine.

It belongs to the G-protein coupled receptor 1 family.

The protein localises to the cell membrane. Functionally, receptor for neuropeptide Y and peptide YY. The rank order of affinity of this receptor for pancreatic polypeptides is NPY &gt; [Pro-34] PYY, PYY and [Leu-31, Pro-34] NPY &gt; NPY (2-36) &gt; [Ile-31, Gln-34] PP and PYY (3-36) &gt; PP &gt; NPY free acid. The sequence is that of Neuropeptide Y receptor type 1 (NPY1R) from Homo sapiens (Human).